The sequence spans 327 residues: Ribosomal RNA small subunit methyltransferase H (327 aa).

Residues 36–38, Asp-55, Leu-89, Asp-103, and Gln-110 each bind S-adenosyl-L-methionine; that span reads GGH. The tract at residues 286–327 is disordered; it reads GAEPASDTEIEQNARAGSVRLRAAERTAAEPGRAHNPTGGVR.

It belongs to the methyltransferase superfamily. RsmH family.

It is found in the cytoplasm. It carries out the reaction cytidine(1402) in 16S rRNA + S-adenosyl-L-methionine = N(4)-methylcytidine(1402) in 16S rRNA + S-adenosyl-L-homocysteine + H(+). Specifically methylates the N4 position of cytidine in position 1402 (C1402) of 16S rRNA. This chain is Ribosomal RNA small subunit methyltransferase H, found in Parafrankia sp. (strain EAN1pec).